A 178-amino-acid polypeptide reads, in one-letter code: Photosystem I assembly protein Ycf4 (178 aa).

The next 2 helical transmembrane spans lie at 19–39 (FLVA…SLSS) and 61–81 (LVMG…WYVI).

Belongs to the Ycf4 family.

Its subcellular location is the cellular thylakoid membrane. Seems to be required for the assembly of the photosystem I complex. The protein is Photosystem I assembly protein Ycf4 of Synechococcus sp. (strain CC9902).